Consider the following 72-residue polypeptide: Translation initiation factor IF-1 (72 aa).

One can recognise an S1-like domain in the interval 1–72; the sequence is MAKDDVIEVE…TRGRITYRFK (72 aa).

The protein belongs to the IF-1 family. As to quaternary structure, component of the 30S ribosomal translation pre-initiation complex which assembles on the 30S ribosome in the order IF-2 and IF-3, IF-1 and N-formylmethionyl-tRNA(fMet); mRNA recruitment can occur at any time during PIC assembly.

Its subcellular location is the cytoplasm. Its function is as follows. One of the essential components for the initiation of protein synthesis. Stabilizes the binding of IF-2 and IF-3 on the 30S subunit to which N-formylmethionyl-tRNA(fMet) subsequently binds. Helps modulate mRNA selection, yielding the 30S pre-initiation complex (PIC). Upon addition of the 50S ribosomal subunit IF-1, IF-2 and IF-3 are released leaving the mature 70S translation initiation complex. The polypeptide is Translation initiation factor IF-1 (Streptococcus pneumoniae serotype 2 (strain D39 / NCTC 7466)).